The following is a 128-amino-acid chain: L-ectoine synthase (128 aa).

The protein belongs to the ectoine synthase family.

The catalysed reaction is (2S)-4-acetamido-2-aminobutanoate = L-ectoine + H2O. The protein operates within amine and polyamine biosynthesis; ectoine biosynthesis; L-ectoine from L-aspartate 4-semialdehyde: step 3/3. Its function is as follows. Catalyzes the circularization of gamma-N-acetyl-alpha,gamma-diaminobutyric acid (ADABA) to ectoine (1,4,5,6-tetrahydro-2-methyl-4-pyrimidine carboxylic acid), which is an excellent osmoprotectant. The sequence is that of L-ectoine synthase from Aliivibrio fischeri (strain ATCC 700601 / ES114) (Vibrio fischeri).